The following is a 719-amino-acid chain: BRCA1-A complex subunit RAP80 (719 aa).

Residues 1 to 30 are disordered; the sequence is MPRRKKKVKEVSESRNLEKKDVETTSSVSV. Positions 1–101 are necessary for transcriptional repression; sequence MPRRKKKVKE…SEQEAREVNS (101 aa). Residues 9–23 are compositionally biased toward basic and acidic residues; the sequence is KEVSESRNLEKKDVE. Lys20 participates in a covalent cross-link: Glycyl lysine isopeptide (Lys-Gly) (interchain with G-Cter in SUMO2). Ser29 is modified (phosphoserine). A Glycyl lysine isopeptide (Lys-Gly) (interchain with G-Cter in SUMO2) cross-link involves residue Lys31. The tract at residues 43–68 is disordered; that stretch reads ISDSDGEEPKEENGLQKTKTKQSNRA. A phosphoserine mark is found at Ser44 and Ser46. The LR motif motif lies at 60 to 78; it reads TKTKQSNRAKCLAKRKIAQ. Glycyl lysine isopeptide (Lys-Gly) (interchain with G-Cter in SUMO2) cross-links involve residues Lys75 and Lys90. The region spanning 80–99 is the UIM 1 domain; sequence TEEEQFALALKMSEQEAREV. Disordered regions lie at residues 93-152 and 164-205; these read EQEA…DSGL and LFKG…DQSS. Residues 97 to 103 form a UIM-linker region; that stretch reads REVNSQE. Positions 100–200 are necessary for interaction with NR6A1 N-terminus; that stretch reads NSQEEEEEEL…EEPVSGSSGS (101 aa). Ser101 carries the post-translational modification Phosphoserine. A UIM 2 domain is found at 105–124; that stretch reads EEEELLRKAIAESLNSCRPS. Residues 117–130 show a composition bias toward polar residues; the sequence is SLNSCRPSDASATR. The residue at position 140 (Ser140) is a Phosphoserine. Lys188 participates in a covalent cross-link: Glycyl lysine isopeptide (Lys-Gly) (interchain with G-Cter in SUMO2). Residues 195–205 are compositionally biased toward low complexity; the sequence is SGSSGSWDQSS. A Phosphoserine modification is found at Ser205. Residue Lys245 forms a Glycyl lysine isopeptide (Lys-Gly) (interchain with G-Cter in SUMO2) linkage. The tract at residues 270–400 is AIR; the sequence is TGGTVNYFWG…EEEPTTSHGQ (131 aa). A disordered region spans residues 320–378; that stretch reads FGEPVLPRPPSLIQNECGQGEQASEKNECISEDMGDEDKEERQESRASDWHSKTKDFQE. The segment covering 349–358 has biased composition (acidic residues); the sequence is ISEDMGDEDK. The segment covering 359–378 has biased composition (basic and acidic residues); it reads EERQESRASDWHSKTKDFQE. At Ser379 the chain carries Phosphoserine. Glycyl lysine isopeptide (Lys-Gly) (interchain with G-Cter in SUMO2) cross-links involve residues Lys382 and Lys387. The interval 391 to 422 is disordered; it reads EEEPTTSHGQSSQGIVEETSEEGNSVPASQSV. Residues 400 to 500 are necessary for interaction with NR6A1 C-terminus; sequence QSSQGIVEET…EVAISTFSSS (101 aa). Phosphoserine occurs at positions 402 and 419. A compositionally biased stretch (polar residues) spans 412–422; the sequence is EGNSVPASQSV. Lys428 is covalently cross-linked (Glycyl lysine isopeptide (Lys-Gly) (interchain with G-Cter in SUMO2)). Residue Ser466 is modified to Phosphoserine. A UBZ4-type zinc finger spans residues 502–529; it reads QVSCPLCDQCFPPTKIERHAMYCNGLME. Residues Cys505, Cys508, His520, and Cys524 each contribute to the Zn(2+) site. Positions 505–582 are zinc-finger-like region; the sequence is CPLCDQCFPP…REYQCHVDSC (78 aa). Residues Lys544, Lys559, Lys562, Lys587, and Lys607 each participate in a glycyl lysine isopeptide (Lys-Gly) (interchain with G-Cter in SUMO2) cross-link. Positions 588–668 are disordered; it reads ADQGDGPEGS…AGCSREMQSS (81 aa). The span at 614-623 shows a compositional bias: basic and acidic residues; that stretch reads NPKEKGHSEG. Phosphoserine is present on Ser627. Basic and acidic residues predominate over residues 631-643; it reads QSEHKTSDADIKS. Residues Lys635 and Lys642 each participate in a glycyl lysine isopeptide (Lys-Gly) (interchain with G-Cter in SUMO2) cross-link. A phosphoserine mark is found at Ser653 and Ser677. Glycyl lysine isopeptide (Lys-Gly) (interchain with G-Cter in SUMO2) cross-links involve residues Lys696 and Lys697.

This sequence belongs to the RAP80 family. As to quaternary structure, component of the ARISC complex, at least composed of UIMC1/RAP80, ABRAXAS1, BRCC3/BRCC36, BABAM2 and BABAM1/NBA1. Component of the BRCA1-A complex, at least composed of the BRCA1, BARD1, UIMC1/RAP80, ABRAXAS1, BRCC3/BRCC36, BABAM2 and BABAM1/NBA1. In the BRCA1-A complex, interacts directly with ABRAXAS1. Interacts with UBE2I. Interacts with NR6A1. Interacts with ESR1. Interacts with TSP57. Interacts with TRAIP. In terms of processing, sumoylated. Post-translationally, phosphorylated upon DNA damage by ATM or ATR. Expressed in testis, ovary, thymus and heart. Expressed in germ cells of the testis.

It localises to the nucleus. Its function is as follows. Ubiquitin-binding protein. Specifically recognizes and binds 'Lys-63'-linked ubiquitin. Plays a central role in the BRCA1-A complex by specifically binding 'Lys-63'-linked ubiquitinated histones H2A and H2AX at DNA lesions sites, leading to target the BRCA1-BARD1 heterodimer to sites of DNA damage at double-strand breaks (DSBs). The BRCA1-A complex also possesses deubiquitinase activity that specifically removes 'Lys-63'-linked ubiquitin on histones H2A and H2AX. Also weakly binds monoubiquitin but with much less affinity than 'Lys-63'-linked ubiquitin. May interact with monoubiquitinated histones H2A and H2B; the relevance of such results is however unclear in vivo. Does not bind Lys-48'-linked ubiquitin. May indirectly act as a transcriptional repressor by inhibiting the interaction of NR6A1 with the corepressor NCOR1. In Homo sapiens (Human), this protein is BRCA1-A complex subunit RAP80 (UIMC1).